The chain runs to 209 residues: Uracil phosphoribosyltransferase (209 aa).

Residues Arg79, Arg104, and 131-139 (DPMLATGGS) each bind 5-phospho-alpha-D-ribose 1-diphosphate. Residues Ile194 and 199-201 (GDA) each bind uracil. Asp200 contacts 5-phospho-alpha-D-ribose 1-diphosphate.

Belongs to the UPRTase family. Mg(2+) serves as cofactor.

It carries out the reaction UMP + diphosphate = 5-phospho-alpha-D-ribose 1-diphosphate + uracil. It participates in pyrimidine metabolism; UMP biosynthesis via salvage pathway; UMP from uracil: step 1/1. Its activity is regulated as follows. Allosterically activated by GTP. Catalyzes the conversion of uracil and 5-phospho-alpha-D-ribose 1-diphosphate (PRPP) to UMP and diphosphate. This is Uracil phosphoribosyltransferase from Finegoldia magna (strain ATCC 29328 / DSM 20472 / WAL 2508) (Peptostreptococcus magnus).